Reading from the N-terminus, the 202-residue chain is Proteasome subunit beta 1 (202 aa).

Positions 1–8 (MGEVVLPG) are cleaved as a propeptide — removed in mature form; by autocatalysis. The Nucleophile role is filled by Thr-9.

This sequence belongs to the peptidase T1B family. As to quaternary structure, the 20S proteasome core is composed of 14 alpha and 14 beta subunits that assemble into four stacked heptameric rings, resulting in a barrel-shaped structure. The two inner rings, each composed of seven catalytic beta subunits, are sandwiched by two outer rings, each composed of seven alpha subunits. The catalytic chamber with the active sites is on the inside of the barrel. Has a gated structure, the ends of the cylinder being occluded by the N-termini of the alpha-subunits. Is capped at one or both ends by the proteasome regulatory ATPase, PAN.

The protein localises to the cytoplasm. It carries out the reaction Cleavage of peptide bonds with very broad specificity.. With respect to regulation, the formation of the proteasomal ATPase PAN-20S proteasome complex, via the docking of the C-termini of PAN into the intersubunit pockets in the alpha-rings, triggers opening of the gate for substrate entry. Interconversion between the open-gate and close-gate conformations leads to a dynamic regulation of the 20S proteasome proteolysis activity. In terms of biological role, component of the proteasome core, a large protease complex with broad specificity involved in protein degradation. This chain is Proteasome subunit beta 1, found in Desulfurococcus amylolyticus (strain DSM 18924 / JCM 16383 / VKM B-2413 / 1221n) (Desulfurococcus kamchatkensis).